The following is a 522-amino-acid chain: Ribonuclease Y (522 aa).

The helical transmembrane segment at 2–22 (WVEILVGSSAAIISGAAGYLL) threads the bilayer. Positions 212 to 278 (LINTVSIPSE…TKVIELLVED (67 aa)) constitute a KH domain. Residues 338–431 (ALGHSLEVAH…VCAADTLSAA (94 aa)) form the HD domain.

It belongs to the RNase Y family.

It is found in the cell membrane. Endoribonuclease that initiates mRNA decay. The protein is Ribonuclease Y of Nitratiruptor sp. (strain SB155-2).